The chain runs to 103 residues: Large ribosomal subunit protein uL24 (103 aa).

Belongs to the universal ribosomal protein uL24 family. Part of the 50S ribosomal subunit.

In terms of biological role, one of two assembly initiator proteins, it binds directly to the 5'-end of the 23S rRNA, where it nucleates assembly of the 50S subunit. Functionally, one of the proteins that surrounds the polypeptide exit tunnel on the outside of the subunit. The polypeptide is Large ribosomal subunit protein uL24 (Bacillus licheniformis (strain ATCC 14580 / DSM 13 / JCM 2505 / CCUG 7422 / NBRC 12200 / NCIMB 9375 / NCTC 10341 / NRRL NRS-1264 / Gibson 46)).